A 272-amino-acid chain; its full sequence is Tryptophan synthase alpha chain (272 aa).

Active-site proton acceptor residues include Glu-49 and Asp-60.

This sequence belongs to the TrpA family. Tetramer of two alpha and two beta chains.

The catalysed reaction is (1S,2R)-1-C-(indol-3-yl)glycerol 3-phosphate + L-serine = D-glyceraldehyde 3-phosphate + L-tryptophan + H2O. Its pathway is amino-acid biosynthesis; L-tryptophan biosynthesis; L-tryptophan from chorismate: step 5/5. The alpha subunit is responsible for the aldol cleavage of indoleglycerol phosphate to indole and glyceraldehyde 3-phosphate. The chain is Tryptophan synthase alpha chain from Acidithiobacillus ferrooxidans (strain ATCC 23270 / DSM 14882 / CIP 104768 / NCIMB 8455) (Ferrobacillus ferrooxidans (strain ATCC 23270)).